The following is a 181-amino-acid chain: Large ribosomal subunit protein uL5 (181 aa).

The protein belongs to the universal ribosomal protein uL5 family. In terms of assembly, part of the 50S ribosomal subunit; part of the 5S rRNA/L5/L18/L25 subcomplex. Contacts the 5S rRNA and the P site tRNA. Forms a bridge to the 30S subunit in the 70S ribosome.

Its function is as follows. This is one of the proteins that bind and probably mediate the attachment of the 5S RNA into the large ribosomal subunit, where it forms part of the central protuberance. In the 70S ribosome it contacts protein S13 of the 30S subunit (bridge B1b), connecting the 2 subunits; this bridge is implicated in subunit movement. Contacts the P site tRNA; the 5S rRNA and some of its associated proteins might help stabilize positioning of ribosome-bound tRNAs. The chain is Large ribosomal subunit protein uL5 from Helicobacter pylori (strain ATCC 700392 / 26695) (Campylobacter pylori).